Reading from the N-terminus, the 152-residue chain is Urease accessory protein UreE (152 aa).

It belongs to the UreE family.

It localises to the cytoplasm. Involved in urease metallocenter assembly. Binds nickel. Probably functions as a nickel donor during metallocenter assembly. In Citrobacter koseri (strain ATCC BAA-895 / CDC 4225-83 / SGSC4696), this protein is Urease accessory protein UreE.